Consider the following 589-residue polypeptide: Transmembrane 9 superfamily member 5 (589 aa).

An N-terminal signal peptide occupies residues 1–24 (MAQFLLTVLQVLLALTFWIGIGSG). Topologically, residues 25 to 227 (SSNHYNAGDH…SFHPISQKIH (203 aa)) are lumenal. Residues 228 to 248 (FFSFLNSITVVVLLIGLISFL) traverse the membrane as a helical segment. Residues 249-291 (FMRHLKNELRSYSIGDEEERKEAGWKLVHSDVFRCPRNISWLC) lie on the Cytoplasmic side of the membrane. Residues 292–312 (AILGTGTQLLILIIALFALAF) form a helical membrane-spanning segment. At 313-321 (TGFLYPYNR) the chain is on the lumenal side. Residues 322–342 (GMLLTSLVIMYTLTSIVAGYT) form a helical membrane-spanning segment. The Cytoplasmic portion of the chain corresponds to 343–361 (STSFHSQFEGNKQKRSVRL). Residues 362–382 (AGILYPVPFFIILSVLNTVAI) form a helical membrane-spanning segment. The Lumenal segment spans residues 383–394 (TYGATAALPFGT). Residues 395 to 415 (IVIIILIFTLLNIPFLMLGGV) form a helical membrane-spanning segment. The Cytoplasmic portion of the chain corresponds to 416–450 (LGNRFGLLEFQPPSAVKRNPREIPPQNWYRRKLYQ). Residues 451-471 (VFLGGFVPFSAVVLEWHQLYA) form a helical membrane-spanning segment. Residues 472 to 482 (SLWGFKIYTSP) lie on the Lumenal side of the membrane. A helical transmembrane segment spans residues 483–503 (GIMLFTFIVLIFLSSSVGIIL). Over 504–518 (TYIQLSGEDHEWWWR) the chain is Cytoplasmic. Residues 519–539 (SILCGGFTAVFMYGYGVLFYL) traverse the membrane as a helical segment. Residues 540 to 550 (RSDMTGFLQLS) lie on the Lumenal side of the membrane. The helical transmembrane segment at 551-571 (FYLGYTALLCYALFLVLGTIS) threads the bilayer. The Cytoplasmic segment spans residues 572–589 (FLASLMFIRHIYRSVKLE). The Endoplasmic reticulum export signal signature appears at 578-583 (FIRHIY). The short motif at 587 to 589 (KLE) is the Golgi retention signal element.

Belongs to the nonaspanin (TM9SF) (TC 9.A.2) family. As to expression, expressed in the root cap and in giant cells.

It is found in the endosome membrane. The protein localises to the golgi apparatus membrane. This is Transmembrane 9 superfamily member 5 from Arabidopsis thaliana (Mouse-ear cress).